A 333-amino-acid chain; its full sequence is Glycerol-3-phosphate dehydrogenase [NAD(P)+] (333 aa).

3 residues coordinate NADPH: tryptophan 11, arginine 34, and lysine 107. Positions 107, 136, and 138 each coordinate sn-glycerol 3-phosphate. Residue alanine 140 coordinates NADPH. Positions 191, 244, 254, 255, and 256 each coordinate sn-glycerol 3-phosphate. Lysine 191 (proton acceptor) is an active-site residue. Arginine 255 lines the NADPH pocket. Positions 279 and 281 each coordinate NADPH.

Belongs to the NAD-dependent glycerol-3-phosphate dehydrogenase family.

It is found in the cytoplasm. The enzyme catalyses sn-glycerol 3-phosphate + NAD(+) = dihydroxyacetone phosphate + NADH + H(+). The catalysed reaction is sn-glycerol 3-phosphate + NADP(+) = dihydroxyacetone phosphate + NADPH + H(+). Its pathway is membrane lipid metabolism; glycerophospholipid metabolism. Catalyzes the reduction of the glycolytic intermediate dihydroxyacetone phosphate (DHAP) to sn-glycerol 3-phosphate (G3P), the key precursor for phospholipid synthesis. The protein is Glycerol-3-phosphate dehydrogenase [NAD(P)+] of Nitrosospira multiformis (strain ATCC 25196 / NCIMB 11849 / C 71).